An 83-amino-acid polypeptide reads, in one-letter code: Protein L83L (83 aa).

Positions 1–10 (MDTSLKNNDG) are enriched in polar residues. Positions 1–25 (MDTSLKNNDGASEADNKNYQDYKDE) are disordered. Residues 14 to 25 (ADNKNYQDYKDE) show a composition bias toward basic and acidic residues.

Belongs to the asfivirus L83L family. Interacts with host IL1B.

It is found in the host cytoplasm. Its function is as follows. May subvert the host innate immune response by interacting with host IL1B and interfering with its function. The sequence is that of Protein L83L from Ornithodoros (relapsing fever ticks).